The primary structure comprises 241 residues: HTH-type quorum-sensing regulator RhlR (241 aa).

The region spanning 174-239 is the HTH luxR-type domain; that stretch reads LMSNPVCLSH…LAAAYAAALG (66 aa). A DNA-binding region (H-T-H motif) is located at residues 198–217; sequence SGEIAIILSISESTVNFHHK.

Belongs to the autoinducer-regulated transcriptional regulatory protein family. Homodimer in the absence of any acyl-L-homoserine lactone. The presence of the autoinducer C4-HSL has no significant effect on dimerization whereas N-(3-oxododecanoyl)-L-homoserine lactone (3O-C12-HSL), the LasR inducer, is able to dissociate the RhlR homodimers into monomers.

It localises to the cytoplasm. With respect to regulation, activated by interaction with the autoinducer signal molecule N-butanoyl-L-homoserine lactone (C4-HSL or BHL), the product of the RhlI synthase. Is also activated by binding to rosmarinic acid (RA), a homoserine lactone mimic produced by plants, which induces a broad quorum sensing response, including the induction of all major quorum sensing controlled virulence factors. Rosmarinic acid secretion may be a plant defense mechanism to stimulate a premature quorum sensing response. Its function is as follows. Quorum-sensing regulator that controls the expression of multiple virulence factors in response to extracellular signaling molecules called autoinducers. Involved, among others, in the transcriptional regulation of genes that are responsible for rhamnolipid surfactant biosynthesis. Acts by binding to a specific sequence in the rhlAB regulatory region, both in the presence and in the absence of its autoinducer. In the former case it activates transcription of the promoter, whereas in the latter it acts as a transcriptional repressor. Also regulates the expression of the rmlBDAC operon, encoding dTDP-L-rhamnose biosynthetic enzymes, by binding to the rml box in the promoter region. In addition, is involved in the regulation of the production of elastase (lasB) and pyocyanine. The sequence is that of HTH-type quorum-sensing regulator RhlR from Pseudomonas aeruginosa (strain ATCC 15692 / DSM 22644 / CIP 104116 / JCM 14847 / LMG 12228 / 1C / PRS 101 / PAO1).